The chain runs to 274 residues: MSLQNDIIKELGVKPTIVPKEEIRRSLDFLKAYLLKHPFLKTLVLGISGGQDSTLAGRLAQLAVEELRQETGDQSYRFIAIRLPYGVQADEADAQKALAFIRPDQTLTINIKAAVDGQVEALKAAGIEITDFNKGNIKARQRMISQYAVAGQTSGAVIGTDHAAENITGFFTKFGDGGADILPLFRLNKRQGKALLREMGADASLYEKVPTADLEENKPGLADEVALGVTYNDIDDYLEGKEISKEAQEKIESWWYKGLHKRHLPITIFDDFWK.

46–53 (GISGGQDS) contributes to the ATP binding site. D52 contacts Mg(2+). A deamido-NAD(+)-binding site is contributed by R140. Residue T160 participates in ATP binding. Position 165 (E165) interacts with Mg(2+). Deamido-NAD(+)-binding residues include K173 and D180. K189 and T211 together coordinate ATP. 260–261 (HK) provides a ligand contact to deamido-NAD(+).

The protein belongs to the NAD synthetase family. As to quaternary structure, homodimer.

It catalyses the reaction deamido-NAD(+) + NH4(+) + ATP = AMP + diphosphate + NAD(+) + H(+). Its pathway is cofactor biosynthesis; NAD(+) biosynthesis; NAD(+) from deamido-NAD(+) (ammonia route): step 1/1. Catalyzes the ATP-dependent amidation of deamido-NAD to form NAD. Uses ammonia as a nitrogen source. In Streptococcus uberis (strain ATCC BAA-854 / 0140J), this protein is NH(3)-dependent NAD(+) synthetase.